A 239-amino-acid polypeptide reads, in one-letter code: Ribosomal RNA small subunit methyltransferase G (239 aa).

S-adenosyl-L-methionine contacts are provided by residues G78, F83, 129-130 (AE), and R148.

Belongs to the methyltransferase superfamily. RNA methyltransferase RsmG family.

The protein resides in the cytoplasm. Specifically methylates the N7 position of a guanine in 16S rRNA. In Clostridium perfringens (strain SM101 / Type A), this protein is Ribosomal RNA small subunit methyltransferase G.